Reading from the N-terminus, the 435-residue chain is Adenylosuccinate synthetase (435 aa).

GTP contacts are provided by residues 17–23 (GDEGKGK) and 45–47 (GHT). D18 functions as the Proton acceptor in the catalytic mechanism. The Mg(2+) site is built by D18 and G45. Residues 18–21 (DEGK), 43–46 (NAGH), T134, R148, Q229, T244, and R308 each bind IMP. The Proton donor role is filled by H46. 304 to 310 (SVTGRPR) serves as a coordination point for substrate. Residues R310, 336–338 (KLD), and 418–420 (STG) each bind GTP.

It belongs to the adenylosuccinate synthetase family. Homodimer. Mg(2+) is required as a cofactor.

The protein localises to the cytoplasm. The enzyme catalyses IMP + L-aspartate + GTP = N(6)-(1,2-dicarboxyethyl)-AMP + GDP + phosphate + 2 H(+). Its pathway is purine metabolism; AMP biosynthesis via de novo pathway; AMP from IMP: step 1/2. Functionally, plays an important role in the de novo pathway of purine nucleotide biosynthesis. Catalyzes the first committed step in the biosynthesis of AMP from IMP. This chain is Adenylosuccinate synthetase, found in Bordetella pertussis (strain Tohama I / ATCC BAA-589 / NCTC 13251).